We begin with the raw amino-acid sequence, 880 residues long: DNA gyrase subunit A (880 aa).

The region spanning 35 to 530 is the Topo IIA-type catalytic domain; the sequence is LPDVRDGLKP…ASGDIDLEDL (496 aa). Tyr123 serves as the catalytic O-(5'-phospho-DNA)-tyrosine intermediate. Positions 557 to 563 match the GyrA-box motif; sequence QRRGGKG.

This sequence belongs to the type II topoisomerase GyrA/ParC subunit family. As to quaternary structure, heterotetramer, composed of two GyrA and two GyrB chains. In the heterotetramer, GyrA contains the active site tyrosine that forms a transient covalent intermediate with DNA, while GyrB binds cofactors and catalyzes ATP hydrolysis.

The protein resides in the cytoplasm. The catalysed reaction is ATP-dependent breakage, passage and rejoining of double-stranded DNA.. Functionally, a type II topoisomerase that negatively supercoils closed circular double-stranded (ds) DNA in an ATP-dependent manner to modulate DNA topology and maintain chromosomes in an underwound state. Negative supercoiling favors strand separation, and DNA replication, transcription, recombination and repair, all of which involve strand separation. Also able to catalyze the interconversion of other topological isomers of dsDNA rings, including catenanes and knotted rings. Type II topoisomerases break and join 2 DNA strands simultaneously in an ATP-dependent manner. The polypeptide is DNA gyrase subunit A (Haemophilus influenzae (strain ATCC 51907 / DSM 11121 / KW20 / Rd)).